Reading from the N-terminus, the 315-residue chain is Ribosomal RNA small subunit methyltransferase H (315 aa).

Residues 33–35, aspartate 53, phenylalanine 80, aspartate 101, and glutamine 108 each bind S-adenosyl-L-methionine; that span reads AGH.

It belongs to the methyltransferase superfamily. RsmH family.

It is found in the cytoplasm. The enzyme catalyses cytidine(1402) in 16S rRNA + S-adenosyl-L-methionine = N(4)-methylcytidine(1402) in 16S rRNA + S-adenosyl-L-homocysteine + H(+). Its function is as follows. Specifically methylates the N4 position of cytidine in position 1402 (C1402) of 16S rRNA. This Natranaerobius thermophilus (strain ATCC BAA-1301 / DSM 18059 / JW/NM-WN-LF) protein is Ribosomal RNA small subunit methyltransferase H.